We begin with the raw amino-acid sequence, 287 residues long: Elongation factor Ts (287 aa).

Positions 80–83 (TDFL) are involved in Mg(2+) ion dislocation from EF-Tu.

This sequence belongs to the EF-Ts family.

Its subcellular location is the cytoplasm. Functionally, associates with the EF-Tu.GDP complex and induces the exchange of GDP to GTP. It remains bound to the aminoacyl-tRNA.EF-Tu.GTP complex up to the GTP hydrolysis stage on the ribosome. The polypeptide is Elongation factor Ts (Pseudomonas putida (strain ATCC 700007 / DSM 6899 / JCM 31910 / BCRC 17059 / LMG 24140 / F1)).